A 101-amino-acid chain; its full sequence is UPF0473 protein STER_1939 (101 aa).

It belongs to the UPF0473 family.

The polypeptide is UPF0473 protein STER_1939 (Streptococcus thermophilus (strain ATCC BAA-491 / LMD-9)).